The primary structure comprises 219 residues: 7-cyano-7-deazaguanine synthase 2 (219 aa).

8–18 (YSGGMDSFTAL) provides a ligand contact to ATP. Positions 185, 193, 196, and 199 each coordinate Zn(2+).

It belongs to the QueC family. The cofactor is Zn(2+).

The enzyme catalyses 7-carboxy-7-deazaguanine + NH4(+) + ATP = 7-cyano-7-deazaguanine + ADP + phosphate + H2O + H(+). It participates in purine metabolism; 7-cyano-7-deazaguanine biosynthesis. Catalyzes the ATP-dependent conversion of 7-carboxy-7-deazaguanine (CDG) to 7-cyano-7-deazaguanine (preQ(0)). In Colwellia psychrerythraea (strain 34H / ATCC BAA-681) (Vibrio psychroerythus), this protein is 7-cyano-7-deazaguanine synthase 2.